The following is a 462-amino-acid chain: Citrate synthase, mitochondrial (462 aa).

Residues Met1–Phe21 constitute a mitochondrion transit peptide. Catalysis depends on residues His300, His346, and Asp401.

This sequence belongs to the citrate synthase family. Homodimer.

It localises to the mitochondrion matrix. It is found in the cytoplasm. Its subcellular location is the cytoskeleton. The catalysed reaction is oxaloacetate + acetyl-CoA + H2O = citrate + CoA + H(+). The protein operates within carbohydrate metabolism; tricarboxylic acid cycle; isocitrate from oxaloacetate: step 1/2. Its function is as follows. Structural protein involved in oral morphogenesis and in pronuclear behavior during conjugation. Respiratory enzyme. The chain is Citrate synthase, mitochondrial from Tetrahymena thermophila.